Here is a 234-residue protein sequence, read N- to C-terminus: Ribonuclease Trv (234 aa).

Cystine bridges form between Cys-5/Cys-24, Cys-13/Cys-59, Cys-23/Cys-125, Cys-67/Cys-117, and Cys-189/Cys-224. Asn-15 carries an N-linked (GlcNAc...) asparagine glycan. Residue His-52 is part of the active site. Asn-75 carries an N-linked (GlcNAc...) asparagine glycan. Residues Glu-110 and His-114 contribute to the active site.

Belongs to the RNase T2 family.

The catalysed reaction is a ribonucleotidyl-ribonucleotide-RNA + H2O = a 3'-end 3'-phospho-ribonucleotide-RNA + a 5'-end dephospho-ribonucleoside-RNA + H(+). Its function is as follows. This is a base non-specific and adenylic acid preferential ribonuclease. The chain is Ribonuclease Trv from Hypocrea rufa (Trichoderma viride).